Consider the following 371-residue polypeptide: Antibiotic efflux pump periplasmic linker protein ArpA (371 aa).

The signal sequence occupies residues 1–22 (MQFKPAVTALVSAVALATLLSG). Residue C23 is the site of N-palmitoyl cysteine attachment. The S-diacylglycerol cysteine moiety is linked to residue C23. Positions 115–155 (LAERYKQLIDEQAVSKQEYDDANAKRLQAEASLKSAQIDLR) form a coiled coil.

Belongs to the membrane fusion protein (MFP) (TC 8.A.1) family.

The protein localises to the cell inner membrane. The periplasmic linker protein component of an antibiotic efflux pump. Confers resistance to numerous structurally unrelated antibiotics such as carbenicillin, chloramphenicol, erythromycin, novobiocin, streptomycin and tetracycline. Is not involved in organic solvent efflux. This is Antibiotic efflux pump periplasmic linker protein ArpA (arpA) from Pseudomonas putida (Arthrobacter siderocapsulatus).